A 131-amino-acid polypeptide reads, in one-letter code: Small ribosomal subunit protein bS6 (131 aa).

The segment at 100-131 is disordered; the sequence is SPMVKAKDERRSRDYSLEDANMDAEEAGDSEE. Basic and acidic residues predominate over residues 104–115; the sequence is KAKDERRSRDYS. Residues 119–131 are compositionally biased toward acidic residues; that stretch reads ANMDAEEAGDSEE.

Belongs to the bacterial ribosomal protein bS6 family.

Binds together with bS18 to 16S ribosomal RNA. In Photorhabdus laumondii subsp. laumondii (strain DSM 15139 / CIP 105565 / TT01) (Photorhabdus luminescens subsp. laumondii), this protein is Small ribosomal subunit protein bS6.